Here is a 127-residue protein sequence, read N- to C-terminus: Large ribosomal subunit protein bL12 (127 aa).

Belongs to the bacterial ribosomal protein bL12 family. In terms of assembly, homodimer. Part of the ribosomal stalk of the 50S ribosomal subunit. Forms a multimeric L10(L12)X complex, where L10 forms an elongated spine to which 2 to 4 L12 dimers bind in a sequential fashion. Binds GTP-bound translation factors.

Its function is as follows. Forms part of the ribosomal stalk which helps the ribosome interact with GTP-bound translation factors. Is thus essential for accurate translation. The polypeptide is Large ribosomal subunit protein bL12 (Streptomyces coelicolor (strain ATCC BAA-471 / A3(2) / M145)).